Consider the following 460-residue polypeptide: Orexin receptor type 2 (460 aa).

Residues 1-54 lie on the Extracellular side of the membrane; the sequence is MSSTKLEDSLSRRNWSSASELNETQEPFLNPTDYDDEEFLRYLWREYLHPKEYE. 2 N-linked (GlcNAc...) asparagine glycosylation sites follow: asparagine 14 and asparagine 22. The interval 33–49 is required for response to orexin-A; sequence DYDDEEFLRYLWREYLH. A helical transmembrane segment spans residues 55–75; it reads WVLIAGYIIVFVVALIGNVLV. The Cytoplasmic segment spans residues 76 to 88; that stretch reads CVAVWKNHHMRTV. The helical transmembrane segment at 89–110 threads the bilayer; sequence TNYFIVNLSLADVLVTITCLPA. Residues 111 to 127 lie on the Extracellular side of the membrane; that stretch reads TLVVDITETWFFGQSLC. A disulfide bond links cysteine 127 and cysteine 210. Residues 128-150 form a helical membrane-spanning segment; it reads KVIPYLQTVSVSVSVLTLSCIAL. Residues 151-170 are Cytoplasmic-facing; that stretch reads DRWYAICHPLMFKSTAKRAR. A helical transmembrane segment spans residues 171 to 191; that stretch reads NSIVVIWIVSCIIMIPQAIVM. Residues 192–222 are Extracellular-facing; the sequence is ECSSMLPGLANKTTLFTVCDEHWGGEVYPKM. N-linked (GlcNAc...) asparagine glycosylation is present at asparagine 202. A helical membrane pass occupies residues 223-243; the sequence is YHICFFLVTYMAPLCLMILAY. Over 244–304 the chain is Cytoplasmic; it reads LQIFRKLWCR…QIRARRKTAR (61 aa). The chain crosses the membrane as a helical span at residues 305–326; the sequence is MLMVVLLVFAICYLPISILNVL. The Extracellular portion of the chain corresponds to 327-342; the sequence is KRVFGMFTHTEDRETV. The helical transmembrane segment at 343–366 threads the bilayer; the sequence is YAWFTFSHWLVYANSAANPIIYNF. At 367 to 460 the chain is on the cytoplasmic side; it reads LSGKFREEFK…SSLLSTWLEV (94 aa).

This sequence belongs to the G-protein coupled receptor 1 family. As to expression, widely expressed. Isoform 2 not detected in skeletal muscle and kidney.

It is found in the cell membrane. Functionally, nonselective, high-affinity receptor for both orexin-A and orexin-B neuropeptides. Triggers an increase in cytoplasmic Ca(2+) levels in response to orexin-A binding. In Mus musculus (Mouse), this protein is Orexin receptor type 2 (Hcrtr2).